The primary structure comprises 302 residues: Homoserine O-acetyltransferase 1 (302 aa).

Residue C142 is the Acyl-thioester intermediate of the active site. Substrate-binding residues include K163 and S192. Catalysis depends on H235, which acts as the Proton acceptor. Residue E237 is part of the active site. Position 249 (R249) interacts with substrate.

It belongs to the MetA family.

Its subcellular location is the cytoplasm. It catalyses the reaction L-homoserine + acetyl-CoA = O-acetyl-L-homoserine + CoA. Its pathway is amino-acid biosynthesis; L-methionine biosynthesis via de novo pathway; O-acetyl-L-homoserine from L-homoserine: step 1/1. In terms of biological role, transfers an acetyl group from acetyl-CoA to L-homoserine, forming acetyl-L-homoserine. The protein is Homoserine O-acetyltransferase 1 of Ilyobacter polytropus (strain ATCC 51220 / DSM 2926 / LMG 16218 / CuHBu1).